Consider the following 324-residue polypeptide: D-alanine--D-alanine ligase (324 aa).

The ATP-grasp domain occupies K116 to A311. A142–T197 contributes to the ATP binding site. The Mg(2+) site is built by D265, E278, and N280.

The protein belongs to the D-alanine--D-alanine ligase family. Mg(2+) serves as cofactor. The cofactor is Mn(2+).

Its subcellular location is the cytoplasm. It catalyses the reaction 2 D-alanine + ATP = D-alanyl-D-alanine + ADP + phosphate + H(+). The protein operates within cell wall biogenesis; peptidoglycan biosynthesis. Cell wall formation. The protein is D-alanine--D-alanine ligase of Pseudomonas fluorescens (strain Pf0-1).